The primary structure comprises 149 residues: Calmodulin (149 aa).

N-acetylalanine is present on A2. 4 EF-hand domains span residues 8–43 (EQIA…LGQN), 44–79 (PTEA…KMKD), 81–116 (DSEE…LGEK), and 117–149 (LTDE…MLAK). Ca(2+)-binding residues include D21, D23, D25, C27, E32, D57, D59, N61, T63, E68, D94, D96, N98, and E105. Position 116 is an N6,N6,N6-trimethyllysine (K116). Positions 130, 132, 134, 136, and 141 each coordinate Ca(2+).

This sequence belongs to the calmodulin family.

In terms of biological role, calmodulin mediates the control of a large number of enzymes, ion channels and other proteins by Ca(2+). Among the enzymes to be stimulated by the calmodulin-Ca(2+) complex are a number of protein kinases and phosphatases. The sequence is that of Calmodulin (CALM1) from Solanum lycopersicum (Tomato).